The primary structure comprises 284 residues: 2-dehydro-3-deoxyphosphooctonate aldolase (284 aa).

It belongs to the KdsA family.

The protein localises to the cytoplasm. The enzyme catalyses D-arabinose 5-phosphate + phosphoenolpyruvate + H2O = 3-deoxy-alpha-D-manno-2-octulosonate-8-phosphate + phosphate. Its pathway is carbohydrate biosynthesis; 3-deoxy-D-manno-octulosonate biosynthesis; 3-deoxy-D-manno-octulosonate from D-ribulose 5-phosphate: step 2/3. It functions in the pathway bacterial outer membrane biogenesis; lipopolysaccharide biosynthesis. The protein is 2-dehydro-3-deoxyphosphooctonate aldolase of Vibrio atlanticus (strain LGP32) (Vibrio splendidus (strain Mel32)).